The sequence spans 102 residues: Large ribosomal subunit protein uL24 (102 aa).

It belongs to the universal ribosomal protein uL24 family. Part of the 50S ribosomal subunit.

One of two assembly initiator proteins, it binds directly to the 5'-end of the 23S rRNA, where it nucleates assembly of the 50S subunit. Functionally, one of the proteins that surrounds the polypeptide exit tunnel on the outside of the subunit. The sequence is that of Large ribosomal subunit protein uL24 from Limosilactobacillus fermentum (strain NBRC 3956 / LMG 18251) (Lactobacillus fermentum).